The following is a 134-amino-acid chain: Citrolysin protein 2 (134 aa).

The polypeptide is Citrolysin protein 2 (Citrobacter freundii).